Consider the following 320-residue polypeptide: Probable 5-dehydro-4-deoxyglucarate dehydratase (320 aa).

This sequence belongs to the DapA family.

The catalysed reaction is 5-dehydro-4-deoxy-D-glucarate + H(+) = 2,5-dioxopentanoate + CO2 + H2O. It functions in the pathway carbohydrate acid metabolism; D-glucarate degradation; 2,5-dioxopentanoate from D-glucarate: step 2/2. The polypeptide is Probable 5-dehydro-4-deoxyglucarate dehydratase (Streptomyces griseus subsp. griseus (strain JCM 4626 / CBS 651.72 / NBRC 13350 / KCC S-0626 / ISP 5235)).